A 269-amino-acid polypeptide reads, in one-letter code: UPF0162 protein BUsg_167 (269 aa).

Belongs to the UPF0162 family.

This Buchnera aphidicola subsp. Schizaphis graminum (strain Sg) protein is UPF0162 protein BUsg_167.